The sequence spans 251 residues: Triosephosphate isomerase (251 aa).

10-12 (NWK) is a binding site for substrate. H98 functions as the Electrophile in the catalytic mechanism. E169 acts as the Proton acceptor in catalysis. Substrate is bound by residues G175, S213, and 234–235 (GG).

The protein belongs to the triosephosphate isomerase family. Homodimer.

It is found in the cytoplasm. It carries out the reaction D-glyceraldehyde 3-phosphate = dihydroxyacetone phosphate. The protein operates within carbohydrate biosynthesis; gluconeogenesis. It functions in the pathway carbohydrate degradation; glycolysis; D-glyceraldehyde 3-phosphate from glycerone phosphate: step 1/1. Its function is as follows. Involved in the gluconeogenesis. Catalyzes stereospecifically the conversion of dihydroxyacetone phosphate (DHAP) to D-glyceraldehyde-3-phosphate (G3P). This chain is Triosephosphate isomerase, found in Paracidovorax citrulli (strain AAC00-1) (Acidovorax citrulli).